A 424-amino-acid chain; its full sequence is Histidine--tRNA ligase (424 aa).

Belongs to the class-II aminoacyl-tRNA synthetase family. As to quaternary structure, homodimer.

Its subcellular location is the cytoplasm. The enzyme catalyses tRNA(His) + L-histidine + ATP = L-histidyl-tRNA(His) + AMP + diphosphate + H(+). The chain is Histidine--tRNA ligase from Shewanella piezotolerans (strain WP3 / JCM 13877).